The primary structure comprises 259 residues: Ubiquitin-conjugating enzyme E2 J2 (259 aa).

Residues methionine 1 to histidine 226 lie on the Cytoplasmic side of the membrane. The UBC core domain occupies threonine 12 to glutamate 162. Cysteine 94 (glycyl thioester intermediate) is an active-site residue. The interval glutamine 174–histidine 200 is disordered. A helical; Anchor for type IV membrane protein membrane pass occupies residues glycine 227 to tyrosine 247. Residues threonine 248–glutamate 259 lie on the Lumenal side of the membrane.

Belongs to the ubiquitin-conjugating enzyme family.

It is found in the endoplasmic reticulum membrane. It carries out the reaction S-ubiquitinyl-[E1 ubiquitin-activating enzyme]-L-cysteine + [E2 ubiquitin-conjugating enzyme]-L-cysteine = [E1 ubiquitin-activating enzyme]-L-cysteine + S-ubiquitinyl-[E2 ubiquitin-conjugating enzyme]-L-cysteine.. It participates in protein modification; protein ubiquitination. Catalyzes the covalent attachment of ubiquitin to other proteins. Seems to function in the selective degradation of misfolded membrane proteins from the endoplasmic reticulum (ERAD). In cooperation with the GATOR2 complex, catalyzes 'Lys-6'-linked ubiquitination of NPRL2. In Bos taurus (Bovine), this protein is Ubiquitin-conjugating enzyme E2 J2 (UBE2J2).